The following is a 1380-amino-acid chain: Protein TORNADO 1 (1380 aa).

LRR repeat units lie at residues 26–46 (FFNL…CQLI), 47–70 (TESS…FIEL), 105–132 (TSKI…ILKR), 161–184 (NDSL…ELSR), 266–289 (NTTV…EFRW), 299–322 (EVKL…LFKN), 323–346 (KSLQ…LLCP), 348–371 (SRFS…GSNT), 446–472 (INPL…IYQK), and 476–502 (NGRK…SVRA). Residues 493–702 (PLTEPKSVRA…HHIRMTSKAI (210 aa)) enclose the Roc domain. GTP-binding positions include 506 to 513 (GQNYAGKT) and 567 to 571 (NLAGQ). Residues 574-594 (FFALHDLMFPSPCFFLIVLSL) traverse the membrane as a helical segment. 6 LRR repeats span residues 640-665 (LTHS…RLRD), 688-712 (VSKL…VYQL), 799-826 (LTQL…ELEK), 1023-1046 (QSQF…TMYD), 1131-1154 (EAVL…IQGL), and 1229-1254 (QLGC…NFMK). 641-644 (THSE) is a binding site for GTP. The COR domain maps to 757–931 (NIQIVETRRH…LQVHLHNRIM (175 aa)). Helical transmembrane passes span 1255 to 1275 (LVTF…HMIP) and 1287 to 1307 (PAVM…AALG).

Expressed in seedlings, roots, leaves, stems and flowers. Present in ovules, prominently in nucellus and integuments.

The protein localises to the membrane. In terms of biological role, involved in the basipetal transport of auxin (IAA) that modulates growth and organs organization. Required for initial divisions in the epidermal/lateral root cap leading to the formation of epidermal cells and a clone of lateral root cap cells, as well as for the maintenance of the radial pattern of cell specification in the root, thus regulating the distinction between the lateral root cap and epidermis. In Arabidopsis thaliana (Mouse-ear cress), this protein is Protein TORNADO 1 (TRN1).